The chain runs to 588 residues: MIQHPRIGIRPTIDGRRQGVRESLEVQTMNMAKSVADLISSTLKYPDGEPVECVISPSTIGRVPEAAASHELFKKSNVCATITVTPCWCYGSETMDMSPDIPHAIWGFNGTERPGAVYLAAVLASHAQKGIPAFGIYGRDVQEASDTAIPEDVKEKLLRYARAALATGLMRDTAYLSMGSVSMGIGGSIVNPDFFQEYLGMRNESVDMTEFTRRMDRGIYDPEEFERALKWVKENVKEGFDHNREDLVLSREEKDRQWEFVIKMFMIGRDLMVGNPRLAELGFEEEAVGHHALVAGFQGQRQWTDHFPNGDFMETFLNTQFDWNGIRKPFVFATENDSLNGVSMLFNYLLTNTPQIFADVRTYWSPEAVERVTGYTLEGRAAAGFLHLINSGSCTLDGTGQATRDGKPVMKPFWELDESEVQAMLENTDFPPANREYFRGGGFSTRFLTKGDMPVTMVRLNLLKGVGPVLQIAEGYTLELPEDVHHTLDNRTDPGWPTTWFAPRLTGKGAFKSVYDVMNNWGANHGAITYGHIGADLITLASMLRIPVNMHNVPEEDIFRPKNWSLFGTEDLESADYRACQLLGPLHK.

Residues Glu335 and Asp359 each act as proton acceptor in the active site. Mn(2+) is bound by residues Glu335, Asp359, and His525.

Belongs to the L-fucose isomerase family. The cofactor is Mn(2+).

It is found in the cytoplasm. The catalysed reaction is L-fucose = L-fuculose. The protein operates within carbohydrate degradation; L-fucose degradation; L-lactaldehyde and glycerone phosphate from L-fucose: step 1/3. Converts the aldose L-fucose into the corresponding ketose L-fuculose. This chain is L-fucose isomerase, found in Streptococcus pneumoniae serotype 2 (strain D39 / NCTC 7466).